We begin with the raw amino-acid sequence, 498 residues long: Interferon regulatory factor 5 (498 aa).

Thr-10 is subject to Phosphothreonine. The Nuclear localization signal signature appears at 12 to 18; that stretch reads PRRVRLK. Residues 14 to 122 constitute a DNA-binding region (IRF tryptophan pentad repeat); the sequence is RVRLKPWLVA…QPYKIYEVCS (109 aa). Residues 121-207 form a disordered region; the sequence is CSNGPAPTDS…SPLAPPPGNP (87 aa). The Nuclear export signal signature appears at 150-160; that stretch reads LQRMLPSLSLT. Residue Ser-158 is modified to Phosphoserine; by TBK1. Positions 168–206 are enriched in pro residues; that stretch reads TLQPPTLRPPTLQPPTLQPPVVLGPPAPDPSPLAPPPGN. Position 293 is a phosphoserine; by TBK1 (Ser-293). Phosphoserine is present on Ser-301. Glycyl lysine isopeptide (Lys-Gly) (interchain with G-Cter in ubiquitin) cross-links involve residues Lys-411 and Lys-412. Ser-431, Ser-435, Ser-437, and Ser-440 each carry phosphoserine. Phosphoserine; by IKKB is present on Ser-446. Positions 478–498 are disordered; the sequence is PPGAGLGVGQGPWPMHPAGMQ.

This sequence belongs to the IRF family. In terms of assembly, homodimer, when phosphorylated. Interacts with TASL (via pLxIS motif); interaction takes place downstream of TLR7, TLR8 or TLR9, leading to its activation. Interacts with MYD88 and TRAF6. In terms of processing, phosphorylation of serine and threonine residues by IKBKB in a C-terminal autoinhibitory region, stimulates dimerization, transport into the nucleus, assembly with the coactivator CBP/EP300 and initiation of transcription. Post-translationally, 'Lys-63'-linked polyubiquitination by TRAF6 is required for activation.

Its subcellular location is the cytoplasm. The protein localises to the nucleus. Its activity is regulated as follows. Maintained as a monomer in an autoinhibited state. Phosphorylation and activation follow the following steps: innate adapter protein TASL recruits IRF5, thereby licensing IRF5 for phosphorylation by IKBKB. Phosphorylated IRF5 dissociates from the adapter proteins, dimerizes, and then enters the nucleus to induce IFNs. With respect to regulation, (Microbial infection) Activated upon coronavirus SARS-CoV-2 infection. Functionally, transcription factor that plays a critical role in innate immunity by activating expression of type I interferon (IFN) IFNA and INFB and inflammatory cytokines downstream of endolysosomal toll-like receptors TLR7, TLR8 and TLR9. Regulates the transcription of type I IFN genes (IFN-alpha and IFN-beta) and IFN-stimulated genes (ISG) by binding to an interferon-stimulated response element (ISRE) in their promoters. Can efficiently activate both the IFN-beta (IFNB) and the IFN-alpha (IFNA) genes and mediate their induction downstream of the TLR-activated, MyD88-dependent pathway. Key transcription factor regulating the IFN response during SARS-CoV-2 infection. In Homo sapiens (Human), this protein is Interferon regulatory factor 5.